The sequence spans 179 residues: Large ribosomal subunit protein bL9 (179 aa).

Residues 156-179 are disordered; it reads PEGAPVPVAEEPAAEAEQAEVAAE. Residues 157–166 show a composition bias toward low complexity; it reads EGAPVPVAEE. Positions 167-179 are enriched in acidic residues; the sequence is PAAEAEQAEVAAE.

Belongs to the bacterial ribosomal protein bL9 family.

In terms of biological role, binds to the 23S rRNA. The protein is Large ribosomal subunit protein bL9 of Porphyromonas gingivalis (strain ATCC 33277 / DSM 20709 / CIP 103683 / JCM 12257 / NCTC 11834 / 2561).